The chain runs to 478 residues: Alpha-1,3-mannosyl-glycoprotein 4-beta-N-acetylglucosaminyltransferase C (478 aa).

At 1-25 (MLKFYQMKYIFQILDKMRCLRKRST) the chain is on the cytoplasmic side. A helical; Signal-anchor for type II membrane protein transmembrane segment spans residues 26 to 43 (VSFLGVLVVFLLFMNLYI). Residues 44–478 (EDSYVLEGDK…IIRSISIWTS (435 aa)) are Lumenal-facing. N-linked (GlcNAc...) asparagine glycosylation is found at Asn84 and Asn215.

It belongs to the glycosyltransferase 54 family. The cofactor is a divalent metal cation.

It is found in the golgi apparatus membrane. The enzyme catalyses N(4)-{beta-D-GlcNAc-(1-&gt;2)-alpha-D-Man-(1-&gt;3)-[beta-D-GlcNAc-(1-&gt;2)-alpha-D-Man-(1-&gt;6)]-beta-D-Man-(1-&gt;4)-beta-D-GlcNAc-(1-&gt;4)-beta-D-GlcNAc}-L-asparaginyl-[protein] + UDP-N-acetyl-alpha-D-glucosamine = N(4)-{beta-D-GlcNAc-(1-&gt;2)-[beta-D-GlcNAc-(1-&gt;4)]-alpha-D-Man-(1-&gt;3)-[beta-D-GlcNAc-(1-&gt;2)-alpha-D-Man-(1-&gt;6)]-beta-D-Man-(1-&gt;4)-beta-D-GlcNAc-(1-&gt;4)-beta-D-GlcNAc}-L-asparaginyl-[protein] + UDP + H(+). Its pathway is protein modification; protein glycosylation. Glycosyltransferase that participates in the transfer of N-acetylglucosamine (GlcNAc) to the core mannose residues of N-linked glycans. Catalyzes the formation of the GlcNAcbeta1-4 branch on the GlcNAcbeta1-2Manalpha1-3 arm of the core structure of N-linked glycans. Essential for the production of tri- and tetra-antennary N-linked sugar chains. Does not catalyze the transfer of GlcNAc to the Manalpha1-6 arm to form GlcNAcBeta1-4Manalpha1-6 linkage ('GnT-VI' activity). The chain is Alpha-1,3-mannosyl-glycoprotein 4-beta-N-acetylglucosaminyltransferase C (Mgat4c) from Mus musculus (Mouse).